The chain runs to 932 residues: DNA mismatch repair protein MutS (932 aa).

ATP is bound at residue 615–622 (GPNMAGKS).

This sequence belongs to the DNA mismatch repair MutS family.

This protein is involved in the repair of mismatches in DNA. It is possible that it carries out the mismatch recognition step. This protein has a weak ATPase activity. This is DNA mismatch repair protein MutS from Clostridium botulinum (strain Loch Maree / Type A3).